Here is a 331-residue protein sequence, read N- to C-terminus: Protein C10 (331 aa).

It belongs to the poxviridae C4/C10 protein family.

In Vaccinia virus (strain Western Reserve) (VACV), this protein is Protein C10.